Reading from the N-terminus, the 675-residue chain is Methionine--tRNA ligase (675 aa).

The 'HIGH' region motif lies at 15–25 (PYANGSIHLGH). Zn(2+) contacts are provided by Cys-146, Cys-149, Cys-159, and Cys-162. A 'KMSKS' region motif is present at residues 332 to 336 (KMSKS). Lys-335 serves as a coordination point for ATP. In terms of domain architecture, tRNA-binding spans 573–675 (DFAKVDMRIA…SGAQPGMQVK (103 aa)).

It belongs to the class-I aminoacyl-tRNA synthetase family. MetG type 1 subfamily. As to quaternary structure, homodimer. Requires Zn(2+) as cofactor.

The protein localises to the cytoplasm. The catalysed reaction is tRNA(Met) + L-methionine + ATP = L-methionyl-tRNA(Met) + AMP + diphosphate. Its function is as follows. Is required not only for elongation of protein synthesis but also for the initiation of all mRNA translation through initiator tRNA(fMet) aminoacylation. This Yersinia pseudotuberculosis serotype IB (strain PB1/+) protein is Methionine--tRNA ligase.